Here is a 121-residue protein sequence, read N- to C-terminus: MARIAGIDIPRDKRVVISLTYIYGVGKTTAQQILKEAGVSEDTRVRDLTEDELGRIRQAVDQYNTEGDLRREVSLNIKRLIEIGSYRGIRHRRGLPVRGQKTKNNSRTRKGPRKTMANKKK.

The segment at 92 to 121 is disordered; sequence RRGLPVRGQKTKNNSRTRKGPRKTMANKKK.

The protein belongs to the universal ribosomal protein uS13 family. Part of the 30S ribosomal subunit. Forms a loose heterodimer with protein S19. Forms two bridges to the 50S subunit in the 70S ribosome.

Functionally, located at the top of the head of the 30S subunit, it contacts several helices of the 16S rRNA. In the 70S ribosome it contacts the 23S rRNA (bridge B1a) and protein L5 of the 50S subunit (bridge B1b), connecting the 2 subunits; these bridges are implicated in subunit movement. Contacts the tRNAs in the A and P-sites. The chain is Small ribosomal subunit protein uS13 from Oceanobacillus iheyensis (strain DSM 14371 / CIP 107618 / JCM 11309 / KCTC 3954 / HTE831).